We begin with the raw amino-acid sequence, 199 residues long: uncharacterized protein (199 aa).

A Nudix hydrolase domain is found at 38-169 (NRRAAVLIPI…SLDIHREGIN (132 aa)). The short motif at 76 to 98 (GKADPDDQSLISTALREAEEEVA) is the Nudix box element. Mg(2+) contacts are provided by E92 and E96.

The protein belongs to the Nudix hydrolase family. PCD1 subfamily. Mn(2+) serves as cofactor. Requires Mg(2+) as cofactor.

Functionally, probably mediates the hydrolysis of some nucleoside diphosphate derivatives. This is an uncharacterized protein from Yersinia pseudotuberculosis serotype I (strain IP32953).